We begin with the raw amino-acid sequence, 376 residues long: Acetylornithine aminotransferase (376 aa).

Pyridoxal 5'-phosphate-binding positions include 96 to 97 (GT) and phenylalanine 128. Arginine 131 contributes to the N(2)-acetyl-L-ornithine binding site. Pyridoxal 5'-phosphate is bound at residue 213–216 (DEVQ). Residue lysine 242 is modified to N6-(pyridoxal phosphate)lysine. Serine 270 lines the N(2)-acetyl-L-ornithine pocket. Residue threonine 271 participates in pyridoxal 5'-phosphate binding.

This sequence belongs to the class-III pyridoxal-phosphate-dependent aminotransferase family. ArgD subfamily. Homodimer. Requires pyridoxal 5'-phosphate as cofactor.

It localises to the cytoplasm. The catalysed reaction is N(2)-acetyl-L-ornithine + 2-oxoglutarate = N-acetyl-L-glutamate 5-semialdehyde + L-glutamate. The protein operates within amino-acid biosynthesis; L-arginine biosynthesis; N(2)-acetyl-L-ornithine from L-glutamate: step 4/4. This is Acetylornithine aminotransferase from Aquifex aeolicus (strain VF5).